Here is a 174-residue protein sequence, read N- to C-terminus: Transcription antitermination protein NusB (174 aa).

Over residues 1–11 (MSEVETTNDQT) the composition is skewed to polar residues. The segment at 1-29 (MSEVETTNDQTPAPKRKDKKPSRSQLRSA) is disordered.

This sequence belongs to the NusB family.

Its function is as follows. Involved in transcription antitermination. Required for transcription of ribosomal RNA (rRNA) genes. Binds specifically to the boxA antiterminator sequence of the ribosomal RNA (rrn) operons. In Marinomonas sp. (strain MWYL1), this protein is Transcription antitermination protein NusB.